Consider the following 265-residue polypeptide: Phosphonoacetaldehyde hydrolase (265 aa).

The active-site Nucleophile is Asp-10. Asp-10 and Ala-12 together coordinate Mg(2+). Lys-51 (schiff-base intermediate with substrate) is an active-site residue. Residue Asp-184 coordinates Mg(2+).

It belongs to the HAD-like hydrolase superfamily. PhnX family. As to quaternary structure, homodimer. Mg(2+) serves as cofactor.

The catalysed reaction is phosphonoacetaldehyde + H2O = acetaldehyde + phosphate + H(+). Involved in phosphonate degradation. This chain is Phosphonoacetaldehyde hydrolase, found in Latilactobacillus sakei subsp. sakei (strain 23K) (Lactobacillus sakei subsp. sakei).